Reading from the N-terminus, the 486-residue chain is Hematopoietic lineage cell-specific protein (486 aa).

Positions 27–66 are involved in HAX-1 binding; sequence FVNDISEKEQRWGAKTIEGSGRTEHINIHQLRNKVSEEHD. At Lys41 the chain carries N6-acetyllysine. Cortactin repeat units follow at residues 79-115, 116-152, and 153-189; these read ASHG…SQTD, AARG…SQKD, and YSHG…SQRD. Position 123 is an N6-acetyllysine (Lys123). Tyr140 is modified (phosphotyrosine). The stretch at 190 to 212 is one Cortactin 4; truncated repeat; the sequence is YAKGFGGQYGIQKDRVDKSAVGF. Lys192 carries the post-translational modification N6-acetyllysine. Residue Tyr198 is modified to Phosphotyrosine. Tyr222 carries the post-translational modification Phosphotyrosine; by FGR. The disordered stretch occupies residues 226–430; the sequence is TPIEAASSGA…AGPSAGAGGA (205 aa). 2 stretches are compositionally biased toward basic and acidic residues: residues 240–258 and 265–276; these read AKFE…EEKA and QQERKAVVKMSR. Lys241 bears the N6-acetyllysine mark. Position 275 is a phosphoserine (Ser275). Thr330 bears the Phosphothreonine mark. Residue Ser333 is modified to Phosphoserine. Positions 358 to 367 are enriched in low complexity; that stretch reads VVEEPVYEAA. Residues 368-413 are compositionally biased toward acidic residues; it reads PELEPEPEPDYEPEPETEPDYEDVGELDRQDEDAEGDYEDVLEPED. Phosphotyrosine; by SYK and FES occurs at positions 388 and 405. The region spanning 429-486 is the SH3 domain; the sequence is GAGISAIALYDYQGEGSDELSFDPDDIITDIEMVDEGWWRGQCRGHFGLFPANYVKLL.

In terms of assembly, interacts (via SH2 domain) with FGR. Associates with the SH2 and SH3 domains of LCK. Binding to he LCK SH3 domain occurs constitutively, while binding to the LCK SH2 domain occurs only upon TCR stimulation. A similar binding pattern was observed with LYN, but not with FYN in which the FYN SH2 region associates upon TCR stimulation but the FYN SH3 region does not associate regardless of TCR stimulation. Directly associates with HAX1, through binding to its C-terminal region. Interacts with HS1BP3. Interacts with FES/FPS. Forms a multiprotein complex with LYN and ANKRD54. Post-translationally, phosphorylated by LYN, FYN and FGR after cross-linking of surface IgM on B-cells. Phosphorylation by LYN, FYN and FGR requires prior phosphorylation by SYK. Binds to LCK in vivo, and is tyrosine phosphorylated upon TCR stimulation. Phosphorylated by FES. In terms of tissue distribution, expressed only in tissues and cells of hematopoietic origin.

The protein localises to the mitochondrion. In terms of biological role, substrate of the antigen receptor-coupled tyrosine kinase. Plays a role in antigen receptor signaling for both clonal expansion and deletion in lymphoid cells. May also be involved in the regulation of gene expression. This is Hematopoietic lineage cell-specific protein (Hcls1) from Mus musculus (Mouse).